The primary structure comprises 346 residues: Sensor histidine kinase GraS (346 aa).

The next 2 helical transmembrane spans lie at 15–35 (MNWIFWILFLNFLMLGISLID) and 43–63 (LFYIVSLNLSLTMIFLLLTYF). The region spanning 126–332 (EFVHDIKTPV…TVRLIFPLQN (207 aa)) is the Histidine kinase domain.

As to quaternary structure, interacts with GraX.

It localises to the cell membrane. It catalyses the reaction ATP + protein L-histidine = ADP + protein N-phospho-L-histidine.. Member of the two-component regulatory system GraR/GraS involved in resistance against cationic antimicrobial peptides (CAMPs). Functions as a sensor protein kinase which phosphorylates GraR through the auxiliary protein GraX. In turn, GraR up-regulates many genes such as adhesins, exoproteins, transporters, toxins, and proteins involved in cell wall synthesis. Down-regulates the expression of many genes involved in RNA and amino acid synthesis or glycolysis. The sequence is that of Sensor histidine kinase GraS (graS) from Staphylococcus aureus (strain COL).